The sequence spans 433 residues: Mblk-1-related factor 1 (433 aa).

An HTH psq-type 1 domain is found at 145 to 197 (NKSNILRRNYTVEDLTQAVEDIRQGKLGTRRASVVYGIPRSTLRNKIYKLEAE). Residues 173–193 (TRRASVVYGIPRSTLRNKIYK) constitute a DNA-binding region (H-T-H motif). The span at 235–254 (GNQSDSSSSSPHASMCPSSP) shows a compositional bias: low complexity. Disordered stretches follow at residues 235–278 (GNQS…SCSP) and 304–338 (ANISNVDTHTPTPISEKSQKMHGNEEWKRSRPKRG). The segment covering 304–319 (ANISNVDTHTPTPISE) has biased composition (polar residues). The segment covering 320–332 (KSQKMHGNEEWKR) has biased composition (basic and acidic residues). One can recognise an HTH psq-type 2 domain in the interval 334–386 (RPKRGQYRKYDKNALDEAVRSVRRGEMTVHRAGSFFGVPHSTLEYKVKERNLM). Positions 362-382 (VHRAGSFFGVPHSTLEYKVKE) form a DNA-binding region, H-T-H motif. Residues 393–433 (LYSHDSSTSEDGSQLVTSTISEKSDSSSHTSTPIPFPISLV) are disordered. The segment covering 396–408 (HDSSTSEDGSQLV) has biased composition (polar residues). The span at 409-424 (TSTISEKSDSSSHTST) shows a compositional bias: low complexity.

As to expression, expressed in AIM, RIC, AIZ, ADF, ADL, ASK, AWA, AUA, AIN, RIH (or RIR) and RIF head neurons and, in PVP, PVQ and DVA (or DVC) tail neurons, some intestinal cells, somatic gonad and vulva.

The protein resides in the nucleus. Functionally, may act as transcription activator. Plays a role in neurogenesis by regulating neurite pruning between left and right AIM neurons and left and right RIF neurons during larval development. Regulates olfactory plasticity. The chain is Mblk-1-related factor 1 from Caenorhabditis elegans.